The primary structure comprises 161 residues: RNA pyrophosphohydrolase (161 aa).

Positions 7 to 149 (KYRPCVGIML…KKEVYKTVIE (143 aa)) constitute a Nudix hydrolase domain. A Nudix box motif is present at residues 40-61 (GGIDDGEKLEQAALRELLEEVG).

This sequence belongs to the Nudix hydrolase family. RppH subfamily. The cofactor is a divalent metal cation.

In terms of biological role, accelerates the degradation of transcripts by removing pyrophosphate from the 5'-end of triphosphorylated RNA, leading to a more labile monophosphorylated state that can stimulate subsequent ribonuclease cleavage. The polypeptide is RNA pyrophosphohydrolase (Wolbachia sp. subsp. Brugia malayi (strain TRS)).